A 673-amino-acid polypeptide reads, in one-letter code: eEF1A lysine and N-terminal methyltransferase homolog (673 aa).

This sequence belongs to the methyltransferase superfamily.

It catalyses the reaction L-lysyl-[protein] + S-adenosyl-L-methionine = N(6)-methyl-L-lysyl-[protein] + S-adenosyl-L-homocysteine + H(+). It carries out the reaction N(6)-methyl-L-lysyl-[protein] + S-adenosyl-L-methionine = N(6),N(6)-dimethyl-L-lysyl-[protein] + S-adenosyl-L-homocysteine + H(+). The enzyme catalyses N-terminal glycyl-L-lysyl-L-glutamyl-[protein] + 3 S-adenosyl-L-methionine = N-terminal N,N,N-trimethyl-glycyl-L-lysyl-L-glutamyl-[protein] + 3 S-adenosyl-L-homocysteine + 3 H(+). Its function is as follows. Dual methyltransferase. It catalyzes N-terminal methylation of target proteins via its C-terminus. It catalyzes dimethylation on lysine residues of target proteins via its N-terminus. This Drosophila pseudoobscura pseudoobscura (Fruit fly) protein is eEF1A lysine and N-terminal methyltransferase homolog.